Here is a 354-residue protein sequence, read N- to C-terminus: GDSL esterase/lipase At5g03820 (354 aa).

The N-terminal stretch at 1–24 (MKMFIIMLMTFSVIACFYAGVGTG) is a signal peptide. Residue S37 is the Nucleophile of the active site. N-linked (GlcNAc...) asparagine glycans are attached at residues N66, N100, N237, N256, N257, N261, and N321. Residues D329 and H332 contribute to the active site.

It belongs to the 'GDSL' lipolytic enzyme family.

Its subcellular location is the secreted. The chain is GDSL esterase/lipase At5g03820 from Arabidopsis thaliana (Mouse-ear cress).